Here is a 324-residue protein sequence, read N- to C-terminus: tRNA pseudouridine synthase B (324 aa).

The Nucleophile role is filled by aspartate 49.

This sequence belongs to the pseudouridine synthase TruB family. Type 1 subfamily.

It carries out the reaction uridine(55) in tRNA = pseudouridine(55) in tRNA. Functionally, responsible for synthesis of pseudouridine from uracil-55 in the psi GC loop of transfer RNAs. This is tRNA pseudouridine synthase B from Tolumonas auensis (strain DSM 9187 / NBRC 110442 / TA 4).